Reading from the N-terminus, the 319-residue chain is 33 kDa chaperonin (319 aa).

Positions 1–10 are enriched in basic and acidic residues; the sequence is MTDASGSERL. The tract at residues 1-25 is disordered; sequence MTDASGSERLKRAKGISEGTPSSLP. Intrachain disulfides connect C261-C263 and C294-C297.

It belongs to the HSP33 family. Under oxidizing conditions two disulfide bonds are formed involving the reactive cysteines. Under reducing conditions zinc is bound to the reactive cysteines and the protein is inactive.

It localises to the cytoplasm. In terms of biological role, redox regulated molecular chaperone. Protects both thermally unfolding and oxidatively damaged proteins from irreversible aggregation. Plays an important role in the bacterial defense system toward oxidative stress. The protein is 33 kDa chaperonin of Synechococcus sp. (strain JA-2-3B'a(2-13)) (Cyanobacteria bacterium Yellowstone B-Prime).